The primary structure comprises 367 residues: 2-aminoethylphosphonate--pyruvate transaminase (367 aa).

Lys193 is subject to N6-(pyridoxal phosphate)lysine.

This sequence belongs to the class-V pyridoxal-phosphate-dependent aminotransferase family. PhnW subfamily. Homodimer. Pyridoxal 5'-phosphate serves as cofactor.

The enzyme catalyses (2-aminoethyl)phosphonate + pyruvate = phosphonoacetaldehyde + L-alanine. Its function is as follows. Involved in phosphonate degradation. In Vibrio cholerae serotype O1 (strain ATCC 39541 / Classical Ogawa 395 / O395), this protein is 2-aminoethylphosphonate--pyruvate transaminase.